The primary structure comprises 601 residues: uncharacterized protein (601 aa).

Residues 1 to 24 (MKLSSLPSGLGLASLLGLISSATA) form the signal peptide.

It is found in the membrane. This is an uncharacterized protein from Schizosaccharomyces pombe (strain 972 / ATCC 24843) (Fission yeast).